The primary structure comprises 909 residues: MAARPLPVSPARALLLALAGALLAPCEARGVSLWNQGRADEVVSASVGSGDLWIPVKSFDSKNHPEVLNIRLQRESKELIINLERNEGLIASSFTETHYLQDGTDVSLARNYTVILGHCYYHGHVRGYSDSAVSLSTCSGLRGLIVFENESYVLEPMKSATNRYKLFPAKKLKSVRGSCGSHHNTPNLAAKNVFPPPSQTWARRHKRETLKATKYVELVIVADNREFQRQGKDLEKVKQRLIEIANHVDKFYRPLNIRIVLVGVEVWNDMDKCSVSQDPFTSLHEFLDWRKMKLLPRKSHDNAQLVSGVYFQGTTIGMAPIMSMCTADQSGGIVMDHSDNPLGAAVTLAHELGHNFGMNHDTLDRGCSCQMAVEKGGCIMNASTGYPFPMVFSSCSRKDLETSLEKGMGVCLFNLPEVRESFGGQKCGNRFVEEGEECDCGEPEECMNRCCNATTCTLKPDAVCAHGLCCEDCQLKPAGTACRDSSNSCDLPEFCTGASPHCPANVYLHDGHSCQDVDGYCYNGICQTHEQQCVTLWGPGAKPAPGICFERVNSAGDPYGNCGKVSKSSFAKCEMRDAKCGKIQCQGGASRPVIGTNAVSIETNIPLQQGGRILCRGTHVYLGDDMPDPGLVLAGTKCADGKICLNRQCQNISVFGVHECAMQCHGRGVCNNRKNCHCEAHWAPPFCDKFGFGGSTDSGPIRQADNQGLTIGILVTILCLLAAGFVVYLKRKTLIRLLFTNKKTTIEKLRCVRPSRPPRGFQPCQAHLGHLGKGLMRKPPDSYPPKDNPRRLLQCQNVDISRPLNGLNVPQPQSTQRVLPPLHRAPRAPSVPARPLPAKPALRQAQGTCKPNPPQKPLPADPLARTTRLTHALARTPGQWETGLRLAPLRPAPQYPHQVPRSTHTAYIK.

Positions 1-28 (MAARPLPVSPARALLLALAGALLAPCEA) are cleaved as a signal peptide. A propeptide spanning residues 29-207 (RGVSLWNQGR…SQTWARRHKR (179 aa)) is cleaved from the precursor. N-linked (GlcNAc...) asparagine glycans are attached at residues N111 and N149. Positions 177-184 (GSCGSHHN) match the Cysteine switch motif. Zn(2+) contacts are provided by C179 and H350. Residues 208–708 (ETLKATKYVE…GPIRQADNQG (501 aa)) lie on the Extracellular side of the membrane. The Peptidase M12B domain occupies 214-416 (KYVELVIVAD…GMGVCLFNLP (203 aa)). Disulfide bonds link C325/C411, C367/C395, and C369/C378. The active site involves E351. H354 and H360 together coordinate Zn(2+). 2 N-linked (GlcNAc...) asparagine glycosylation sites follow: N381 and N452. The 87-residue stretch at 424–510 (GQKCGNRFVE…HCPANVYLHD (87 aa)) folds into the Disintegrin domain. C482 and C502 form a disulfide bridge. N651 carries an N-linked (GlcNAc...) asparagine glycan. In terms of domain architecture, EGF-like spans 656–688 (GVHECAMQCHGRGVCNNRKNCHCEAHWAPPFCD). Intrachain disulfides connect C660–C670, C664–C676, and C678–C687. A helical membrane pass occupies residues 709–729 (LTIGILVTILCLLAAGFVVYL). Residues 730-909 (KRKTLIRLLF…PRSTHTAYIK (180 aa)) lie on the Cytoplasmic side of the membrane. The interval 822–862 (LHRAPRAPSVPARPLPAKPALRQAQGTCKPNPPQKPLPADP) is disordered. The SH3-binding; class II signature appears at 828–834 (APSVPAR). Positions 834-841 (RPLPAKPA) match the SH3-binding; class I motif. A compositionally biased stretch (pro residues) spans 851–860 (PNPPQKPLPA). Positions 885 to 891 (RLAPLRP) match the SH3-binding; class I motif. At Y907 the chain carries Phosphotyrosine; by SRC.

As to quaternary structure, interacts with alpha-actinin-2 and with syndecans. Interacts with SH3PXD2A. Interacts with FST3. Interacts with RACK1; the interaction is required for PKC-dependent translocation of ADAM12 to the cell membrane. Zn(2+) serves as cofactor. The precursor is cleaved by a furin endopeptidase. As to expression, isoform 1 is expressed in placenta and skeletal, cardiac, and smooth muscle. Isoform 2 seems to be expressed only in placenta or in embryo and fetus. Both forms were expressed in some tumor cells lines. Not detected in brain, lung, liver, kidney or pancreas.

It is found in the cell membrane. The protein resides in the secreted. Functionally, involved in skeletal muscle regeneration, specifically at the onset of cell fusion. Also involved in macrophage-derived giant cells (MGC) and osteoclast formation from mononuclear precursors. In Homo sapiens (Human), this protein is Disintegrin and metalloproteinase domain-containing protein 12 (ADAM12).